Consider the following 392-residue polypeptide: Putative cystathionine gamma-lyase 2 (392 aa).

Residues 32-55 (LSSTYKQDNPGEPKGHDYSRAGNP) are disordered. The span at 40-50 (NPGEPKGHDYS) shows a compositional bias: basic and acidic residues. Substrate-binding residues include R51, Y103, and R108. Position 203 is an N6-(pyridoxal phosphate)lysine (K203). E330 contributes to the substrate binding site.

The protein belongs to the trans-sulfuration enzymes family. The cofactor is pyridoxal 5'-phosphate.

The protein localises to the cytoplasm. The enzyme catalyses L,L-cystathionine + H2O = 2-oxobutanoate + L-cysteine + NH4(+). It participates in amino-acid biosynthesis; L-cysteine biosynthesis; L-cysteine from L-homocysteine and L-serine: step 2/2. The protein is Putative cystathionine gamma-lyase 2 (cth-2) of Caenorhabditis elegans.